A 308-amino-acid polypeptide reads, in one-letter code: tRNA dimethylallyltransferase (308 aa).

Position 9-16 (9-16 (GPTAVGKT)) interacts with ATP. 11-16 (TAVGKT) lines the substrate pocket. The interval 34-37 (DSMQ) is interaction with substrate tRNA.

This sequence belongs to the IPP transferase family. Monomer. Mg(2+) serves as cofactor.

The enzyme catalyses adenosine(37) in tRNA + dimethylallyl diphosphate = N(6)-dimethylallyladenosine(37) in tRNA + diphosphate. Catalyzes the transfer of a dimethylallyl group onto the adenine at position 37 in tRNAs that read codons beginning with uridine, leading to the formation of N6-(dimethylallyl)adenosine (i(6)A). This chain is tRNA dimethylallyltransferase, found in Lactobacillus delbrueckii subsp. bulgaricus (strain ATCC BAA-365 / Lb-18).